A 52-amino-acid chain; its full sequence is Large ribosomal subunit protein bL32c (52 aa).

This sequence belongs to the bacterial ribosomal protein bL32 family.

It is found in the plastid. The protein resides in the chloroplast. This Morus indica (Mulberry) protein is Large ribosomal subunit protein bL32c.